The primary structure comprises 172 residues: MKYTLSVLVEDEAGVLTRIAGLFARRGFNIESLAVGPAEQKGISRITMVVPGDDRTVEQLTKQLYKLVNILKVDNITEIPCVERELILVKINASTSSRPEILSILQVFRAKVVDLSENLLVLELTGDPGKVAAIQQLLQKFGIIEIARTGKIALTRTSKVNTEFLKSISMEI.

Positions 4 to 78 (TLSVLVEDEA…NILKVDNITE (75 aa)) constitute an ACT domain.

It belongs to the acetolactate synthase small subunit family. As to quaternary structure, dimer of large and small chains.

Its subcellular location is the plastid. The protein localises to the chloroplast. The catalysed reaction is 2 pyruvate + H(+) = (2S)-2-acetolactate + CO2. It participates in amino-acid biosynthesis; L-isoleucine biosynthesis; L-isoleucine from 2-oxobutanoate: step 1/4. The protein operates within amino-acid biosynthesis; L-valine biosynthesis; L-valine from pyruvate: step 1/4. The polypeptide is Acetolactate synthase small subunit (ilvH) (Cyanidium caldarium (Red alga)).